We begin with the raw amino-acid sequence, 101 residues long: Replication restart protein PriB (101 aa).

The 101-residue stretch at 1–101 folds into the SSB domain; that stretch reads MATNHLVLSG…LHAENVELKT (101 aa).

This sequence belongs to the PriB family. As to quaternary structure, homodimer. Interacts with PriA and DnaT. Component of the replication restart primosome. Primosome assembly occurs via a 'hand-off' mechanism. PriA binds to replication forks, subsequently PriB then DnaT bind; DnaT then displaces ssDNA to generate the helicase loading substrate.

In terms of biological role, involved in the restart of stalled replication forks, which reloads the replicative helicase on sites other than the origin of replication; the PriA-PriB pathway is the major replication restart pathway. During primosome assembly it facilitates complex formation between PriA and DnaT on DNA; stabilizes PriA on DNA. Stimulates the DNA unwinding activity of PriA helicase. In Shewanella sediminis (strain HAW-EB3), this protein is Replication restart protein PriB.